The sequence spans 147 residues: Hemoglobin subunit beta-1 (147 aa).

In terms of domain architecture, Globin spans Asn3–His147. The heme b site is built by His64 and His93.

Belongs to the globin family. Heterotetramer of two alpha chains and two beta chains. In terms of tissue distribution, red blood cells.

Its function is as follows. Involved in oxygen transport from the lung to the various peripheral tissues. The chain is Hemoglobin subunit beta-1 (hbb1) from Xenopus tropicalis (Western clawed frog).